Here is a 62-residue protein sequence, read N- to C-terminus: Rubredoxin-2 (62 aa).

The Rubredoxin-like domain occupies 7–58 (MWRCQMVNCGYVYDPDRGDKRRKVPAGTKFEDLPEDWRCPVCGAGKKSFRRL). Fe cation is bound by residues cysteine 10, cysteine 15, cysteine 45, and cysteine 48.

Belongs to the rubredoxin family. In terms of assembly, monomer. Fe(3+) is required as a cofactor.

Rubredoxin is a small nonheme, iron protein lacking acid-labile sulfide. Its single Fe, chelated to 4 Cys, functions as an electron acceptor and may also stabilize the conformation of the molecule. The chain is Rubredoxin-2 (rd2) from Desulfovibrio desulfuricans (strain ATCC 27774 / DSM 6949 / MB).